The primary structure comprises 284 residues: Bifunctional protein FolD (284 aa).

G166–S168 is an NADP(+) binding site.

It belongs to the tetrahydrofolate dehydrogenase/cyclohydrolase family. Homodimer.

The enzyme catalyses (6R)-5,10-methylene-5,6,7,8-tetrahydrofolate + NADP(+) = (6R)-5,10-methenyltetrahydrofolate + NADPH. The catalysed reaction is (6R)-5,10-methenyltetrahydrofolate + H2O = (6R)-10-formyltetrahydrofolate + H(+). Its pathway is one-carbon metabolism; tetrahydrofolate interconversion. Its function is as follows. Catalyzes the oxidation of 5,10-methylenetetrahydrofolate to 5,10-methenyltetrahydrofolate and then the hydrolysis of 5,10-methenyltetrahydrofolate to 10-formyltetrahydrofolate. The protein is Bifunctional protein FolD of Legionella pneumophila (strain Corby).